A 137-amino-acid polypeptide reads, in one-letter code: Large ribosomal subunit protein uL16 (137 aa).

The protein belongs to the universal ribosomal protein uL16 family. In terms of assembly, part of the 50S ribosomal subunit.

Its function is as follows. Binds 23S rRNA and is also seen to make contacts with the A and possibly P site tRNAs. The chain is Large ribosomal subunit protein uL16 from Streptococcus pneumoniae serotype 2 (strain D39 / NCTC 7466).